Reading from the N-terminus, the 459-residue chain is tRNA modification GTPase MnmE (459 aa).

R23, E88, and R127 together coordinate (6S)-5-formyl-5,6,7,8-tetrahydrofolate. The TrmE-type G domain occupies 223 to 381 (GLNTVIVGKP…FKEVIKELFF (159 aa)). Position 233 (N233) interacts with K(+). GTP is bound by residues 233 to 238 (NVGKSS), 252 to 258 (TDVPGTT), and 277 to 280 (DTAG). S237 serves as a coordination point for Mg(2+). 3 residues coordinate K(+): T252, V254, and T257. T258 serves as a coordination point for Mg(2+). K459 contributes to the (6S)-5-formyl-5,6,7,8-tetrahydrofolate binding site.

It belongs to the TRAFAC class TrmE-Era-EngA-EngB-Septin-like GTPase superfamily. TrmE GTPase family. As to quaternary structure, homodimer. Heterotetramer of two MnmE and two MnmG subunits. Requires K(+) as cofactor.

The protein resides in the cytoplasm. In terms of biological role, exhibits a very high intrinsic GTPase hydrolysis rate. Involved in the addition of a carboxymethylaminomethyl (cmnm) group at the wobble position (U34) of certain tRNAs, forming tRNA-cmnm(5)s(2)U34. The polypeptide is tRNA modification GTPase MnmE (Clostridium novyi (strain NT)).